The following is a 254-amino-acid chain: MNVLVAKTANDAERIAYTLIKERISGKHDFVLGLATGSTPVGMYQMFKQDALDCSHVTSVNLDEYIGLSPEHPQSYNRFMKDRLFDEVPFKQSHLPQGDAPDPQAEAARYEDLVRKLGVDLQLLGIGENGHIAFNEPGTALDAKTHVTELTESTREANRRFFDRLEDVPTHAITMGLDTIMNAREIVLVATGERKAEAVQHMIESVPTVDWPATILQAHPGVTVVLDGAAASRCAESLQARGQEAATRFFTIRD.

D63 functions as the Proton acceptor; for enolization step in the catalytic mechanism. The active-site For ring-opening step is N129. H131 functions as the Proton acceptor; for ring-opening step in the catalytic mechanism. Residue E136 is the For ring-opening step of the active site.

This sequence belongs to the glucosamine/galactosamine-6-phosphate isomerase family. NagB subfamily.

The enzyme catalyses alpha-D-glucosamine 6-phosphate + H2O = beta-D-fructose 6-phosphate + NH4(+). Its pathway is amino-sugar metabolism; N-acetylneuraminate degradation; D-fructose 6-phosphate from N-acetylneuraminate: step 5/5. Catalyzes the reversible isomerization-deamination of glucosamine 6-phosphate (GlcN6P) to form fructose 6-phosphate (Fru6P) and ammonium ion. The polypeptide is Glucosamine-6-phosphate deaminase (Exiguobacterium sp. (strain ATCC BAA-1283 / AT1b)).